A 399-amino-acid polypeptide reads, in one-letter code: MDQPVMDCPVTLVIKAPNQKYDDQTINCFLDWTVEKLKSHLSKVYPSKPLAKDQRLVYSGKLLLDHLLLKDVLRKQDEYHMVHLVCASRTPPSSPKASTSNKSMGTASISRSSSEHSGSASPASIRQDTSSTYPDPRPGDSIRHRHTSLMYNNLVHSHPFSYLRQEYALNPPPGQASPSTFPAYSAFTPLQMMWWQQLYARQYYIYSQATASNQSPSNGENAQPVPRPVINSESPPPNPPRAPPNVAPEMNPNIQMNAQGGPVMNEEDINRDWLDWMYTVSRAAILLSIVYFYSSFSRFVMVMGAMILVYMHQAGWFPLLQDEGQQHARDNAAEVNPDHVNNNDPQELEHRMDEGLQEEHNNNAGGNVVARRGVLASAWSFITTFFTSLIPEGPPQGAN.

Residues 10–89 enclose the Ubiquitin-like domain; sequence VTLVIKAPNQ…HMVHLVCASR (80 aa). Disordered stretches follow at residues 88-144 and 211-250; these read SRTP…SIRH and ASNQ…APEM. Positions 95-106 are enriched in polar residues; the sequence is PKASTSNKSMGT. The segment covering 107–124 has biased composition (low complexity); the sequence is ASISRSSSEHSGSASPAS. Residues 211–221 are compositionally biased toward polar residues; sequence ASNQSPSNGEN. A compositionally biased stretch (pro residues) spans 234–246; that stretch reads SPPPNPPRAPPNV. A helical membrane pass occupies residues 299-319; that stretch reads FVMVMGAMILVYMHQAGWFPL.

It is found in the membrane. In terms of biological role, could be involved in the unfolded protein response (UPR) pathway. This chain is Homocysteine-responsive endoplasmic reticulum-resident ubiquitin-like domain member 2 protein (herpud2), found in Xenopus tropicalis (Western clawed frog).